A 37-amino-acid polypeptide reads, in one-letter code: Large ribosomal subunit protein bL36 (37 aa).

The protein belongs to the bacterial ribosomal protein bL36 family.

In Acidithiobacillus ferrooxidans (strain ATCC 23270 / DSM 14882 / CIP 104768 / NCIMB 8455) (Ferrobacillus ferrooxidans (strain ATCC 23270)), this protein is Large ribosomal subunit protein bL36.